A 335-amino-acid chain; its full sequence is Lipoyl synthase (335 aa).

Positions 55, 60, 66, 81, 85, 88, and 292 each coordinate [4Fe-4S] cluster. One can recognise a Radical SAM core domain in the interval 67-281; sequence WEDREATFLI…SKAAEEIGFL (215 aa).

The protein belongs to the radical SAM superfamily. Lipoyl synthase family. Requires [4Fe-4S] cluster as cofactor.

The protein localises to the cytoplasm. The catalysed reaction is [[Fe-S] cluster scaffold protein carrying a second [4Fe-4S](2+) cluster] + N(6)-octanoyl-L-lysyl-[protein] + 2 oxidized [2Fe-2S]-[ferredoxin] + 2 S-adenosyl-L-methionine + 4 H(+) = [[Fe-S] cluster scaffold protein] + N(6)-[(R)-dihydrolipoyl]-L-lysyl-[protein] + 4 Fe(3+) + 2 hydrogen sulfide + 2 5'-deoxyadenosine + 2 L-methionine + 2 reduced [2Fe-2S]-[ferredoxin]. It participates in protein modification; protein lipoylation via endogenous pathway; protein N(6)-(lipoyl)lysine from octanoyl-[acyl-carrier-protein]: step 2/2. In terms of biological role, catalyzes the radical-mediated insertion of two sulfur atoms into the C-6 and C-8 positions of the octanoyl moiety bound to the lipoyl domains of lipoate-dependent enzymes, thereby converting the octanoylated domains into lipoylated derivatives. The chain is Lipoyl synthase from Kocuria rhizophila (strain ATCC 9341 / DSM 348 / NBRC 103217 / DC2201).